Here is a 341-residue protein sequence, read N- to C-terminus: Phosphoribosylformylglycinamidine cyclo-ligase (341 aa).

It belongs to the AIR synthase family.

It localises to the cytoplasm. The enzyme catalyses 2-formamido-N(1)-(5-O-phospho-beta-D-ribosyl)acetamidine + ATP = 5-amino-1-(5-phospho-beta-D-ribosyl)imidazole + ADP + phosphate + H(+). The protein operates within purine metabolism; IMP biosynthesis via de novo pathway; 5-amino-1-(5-phospho-D-ribosyl)imidazole from N(2)-formyl-N(1)-(5-phospho-D-ribosyl)glycinamide: step 2/2. The protein is Phosphoribosylformylglycinamidine cyclo-ligase of Xanthomonas euvesicatoria pv. vesicatoria (strain 85-10) (Xanthomonas campestris pv. vesicatoria).